The primary structure comprises 332 residues: tRNA dimethylallyltransferase 2 (332 aa).

15–22 provides a ligand contact to ATP; that stretch reads GPTASGKT. 17 to 22 provides a ligand contact to substrate; that stretch reads TASGKT. Interaction with substrate tRNA stretches follow at residues 40–43 and 164–168; these read DSVM and QRIQR.

The protein belongs to the IPP transferase family. In terms of assembly, monomer. The cofactor is Mg(2+).

The catalysed reaction is adenosine(37) in tRNA + dimethylallyl diphosphate = N(6)-dimethylallyladenosine(37) in tRNA + diphosphate. In terms of biological role, catalyzes the transfer of a dimethylallyl group onto the adenine at position 37 in tRNAs that read codons beginning with uridine, leading to the formation of N6-(dimethylallyl)adenosine (i(6)A). This Hahella chejuensis (strain KCTC 2396) protein is tRNA dimethylallyltransferase 2.